A 517-amino-acid polypeptide reads, in one-letter code: Ribose import ATP-binding protein RbsA 1 (517 aa).

2 consecutive ABC transporter domains span residues 11–251 and 263–507; these read LEMR…VGRD and YDPG…ALAT. 43-50 lines the ATP pocket; the sequence is GENGAGKS.

The protein belongs to the ABC transporter superfamily. Ribose importer (TC 3.A.1.2.1) family. The complex is composed of an ATP-binding protein (RbsA), two transmembrane proteins (RbsC) and a solute-binding protein (RbsB).

It is found in the cell inner membrane. It carries out the reaction D-ribose(out) + ATP + H2O = D-ribose(in) + ADP + phosphate + H(+). In terms of biological role, part of the ABC transporter complex RbsABC involved in ribose import. Responsible for energy coupling to the transport system. This is Ribose import ATP-binding protein RbsA 1 from Burkholderia cenocepacia (strain HI2424).